Consider the following 658-residue polypeptide: MPRIAALPDHLVNQIAAGEVVERPANALKEIVENSIDAGATAIDVELDGGGIRLIRVSDNGSGIHPDDIELALHRHATSKIKTLNDLEHVASMGFRGEGLASIASVSRLTLTSRQEDSSHATQVKAEDGKLSSPTAAAHPVGTTIEAAELFFNTPARRKFLKSENTEYAHCATMLERLALAHPHIAFSLKRDGKPVFKLPAQSLHERIAAIVGDDFQTASLEIDSGNGALRLYGAIAKPTFAKGKTDKQYCFVNHRFVRDKVMLHAVKQAYRDVLHNALTPAFVLFLDLPPEAVDVNVHPTKTEIRFRDSRQVHQLVFHTLNKALADTRADLTESVSNAGEVLHDITGVTPAPMPSENDSENLFDSASDYPTGNKPDTRNAFGSSGKTAPMPYQAARAPQQHSLSLRESRAAMNTYAELYKKTDDIDLELSRLEQARFGNMPSETPIPKTDTPLSDGIPSQSELPPLGFAIAQLLGIYILAQAEDSLLLIDMHAAAERVNYEKMKRQRQENGKLQSQRLLIPVTFAASHEECAALADYAETLAGFGLELSDMGGNTLAVRAVPAMLGKADVVSLAKDVLGELAQVGSSQTIEEHENHILATMSCHGSVRAGRQLTLPEMNALLRDMENTPRSNQCNHGRPTWVKLTLKELDALFLRGQ.

Residues 114–130 (RQEDSSHATQVKAEDGK) show a composition bias toward basic and acidic residues. 2 disordered regions span residues 114–137 (RQED…PTAA) and 369–391 (DYPT…TAPM).

It belongs to the DNA mismatch repair MutL/HexB family.

In terms of biological role, this protein is involved in the repair of mismatches in DNA. It is required for dam-dependent methyl-directed DNA mismatch repair. May act as a 'molecular matchmaker', a protein that promotes the formation of a stable complex between two or more DNA-binding proteins in an ATP-dependent manner without itself being part of a final effector complex. The sequence is that of DNA mismatch repair protein MutL from Neisseria meningitidis serogroup C (strain 053442).